Here is a 107-residue protein sequence, read N- to C-terminus: Large ribosomal subunit protein uL24 (107 aa).

It belongs to the universal ribosomal protein uL24 family. As to quaternary structure, part of the 50S ribosomal subunit.

In terms of biological role, one of two assembly initiator proteins, it binds directly to the 5'-end of the 23S rRNA, where it nucleates assembly of the 50S subunit. Its function is as follows. One of the proteins that surrounds the polypeptide exit tunnel on the outside of the subunit. In Pelotomaculum thermopropionicum (strain DSM 13744 / JCM 10971 / SI), this protein is Large ribosomal subunit protein uL24.